We begin with the raw amino-acid sequence, 24 residues long: Brevinin-1BYc (24 aa).

C18 and C24 are disulfide-bonded.

In terms of tissue distribution, expressed by the skin glands.

Its subcellular location is the secreted. Antibacterial activity against Gram-positive bacterium S.aureus. Weak antifungal activity against C.albicans. This chain is Brevinin-1BYc, found in Rana boylii (Foothill yellow-legged frog).